A 106-amino-acid polypeptide reads, in one-letter code: Putative cytochrome c oxidase subunit 7A3, mitochondrial (106 aa).

The transit peptide at 1–23 (MLWNLLALHQIGQRTISTASHRH) directs the protein to the mitochondrion.

This sequence belongs to the cytochrome c oxidase VIIa family.

The protein localises to the mitochondrion inner membrane. The protein is Putative cytochrome c oxidase subunit 7A3, mitochondrial (COX7A2P2) of Homo sapiens (Human).